Here is a 224-residue protein sequence, read N- to C-terminus: Voltage-dependent calcium channel gamma-1 subunit (224 aa).

Residues 1-10 are Cytoplasmic-facing; sequence MSQTKALKVR. The chain crosses the membrane as a helical span at residues 11–29; that stretch reads VTLFCILVGIVLALVAVVT. Residues 30-110 lie on the Extracellular side of the membrane; the sequence is DHWAVLSPHV…TQKEYSISAA (81 aa). Asparagine 43 and asparagine 81 each carry an N-linked (GlcNAc...) asparagine glycan. A disulfide bond links cysteine 57 and cysteine 82. A helical membrane pass occupies residues 111–131; that stretch reads AIAIFSLGFIILGTICGLLSF. Topologically, residues 132–136 are cytoplasmic; it reads RKKRD. A helical membrane pass occupies residues 137 to 157; sequence YLLRPASMFYAFAGLCIFVSV. At 158–181 the chain is on the extracellular side; that stretch reads EVMRQSVKRMIDSEDTVWIDYYYG. Residues 182 to 206 traverse the membrane as a helical segment; sequence WSFACACAAFILLFLGGIALLLFSL. Residues 207 to 224 lie on the Cytoplasmic side of the membrane; the sequence is PRMPQYPWESCMDAEPEH.

The protein belongs to the PMP-22/EMP/MP20 family. CACNG subfamily. In terms of assembly, component of a calcium channel complex consisting of a pore-forming alpha subunit (CACNA1S) and the ancillary subunits CACNB1 or CACNB2, CACNG1 and CACNA2D1. The channel complex contains alpha, beta, gamma and delta subunits in a 1:1:1:1 ratio, i.e. it contains either CACNB1 or CACNB2. In terms of processing, N-glycosylated.

Its subcellular location is the cell membrane. It localises to the sarcolemma. Regulatory subunit of the voltage-gated calcium channel that gives rise to L-type calcium currents in skeletal muscle. Regulates channel inactivation kinetics. In Sus scrofa (Pig), this protein is Voltage-dependent calcium channel gamma-1 subunit (CACNG1).